Reading from the N-terminus, the 303-residue chain is DDRGK domain-containing protein 1 (303 aa).

Residues methionine 1–aspartate 2 are Lumenal-facing. A helical membrane pass occupies residues leucine 3–leucine 23. Residues glutamine 24–alanine 303 are Cytoplasmic-facing. Disordered regions lie at residues glutamate 31 to arginine 53 and alanine 84 to glutamate 160. The span at leucine 106–glutamate 160 shows a compositional bias: basic and acidic residues.

The protein belongs to the DDRGK1 family. In terms of assembly, interacts with Atg9; the interaction is transient.

The protein localises to the endoplasmic reticulum membrane. Its function is as follows. Substrate adapter for ufmylation, the covalent attachment of the ubiquitin-like modifier UFM1 to substrate proteins. Required for ufmylation of Atg9; protects the nervous system during aging, possibly by stabilizing Atg9 and supporting its function. The polypeptide is DDRGK domain-containing protein 1 (Drosophila grimshawi (Hawaiian fruit fly)).